The chain runs to 589 residues: NADPH-dependent diflavin oxidoreductase 1 (589 aa).

In terms of domain architecture, Flavodoxin-like spans 5–151 (ITILYGSETG…YYIEWEAELI (147 aa)). Residues 11–16 (SETGNA), 60–63 (STTG), 98–107 (VGDSSYVKYN), and glutamate 133 each bind FMN. Residues 202 to 439 (DGLKLGTVLE…SIQRSSFKYK (238 aa)) enclose the FAD-binding FR-type domain. Residues arginine 349, 380-383 (RMFS), and 412-415 (GVCT) contribute to the FAD site. NADP(+) contacts are provided by residues threonine 452 and 507–508 (SR). Residue tryptophan 589 participates in FAD binding.

This sequence belongs to the NADPH-dependent diflavin oxidoreductase NDOR1 family. It in the N-terminal section; belongs to the flavodoxin family. In the C-terminal section; belongs to the flavoprotein pyridine nucleotide cytochrome reductase family. In terms of assembly, interacts with DRE2; as part of the cytosolic iron-sulfur (Fe-S) protein assembly (CIA) machinery. FAD is required as a cofactor. Requires FMN as cofactor.

It is found in the cytoplasm. The protein localises to the mitochondrion. It catalyses the reaction 2 oxidized [2Fe-2S]-[protein] + NADPH = 2 reduced [2Fe-2S]-[protein] + NADP(+) + H(+). NADPH-dependent reductase which is a central component of the cytosolic iron-sulfur (Fe-S) protein assembly (CIA) machinery. Transfers electrons from NADPH via its FAD and FMN prosthetic groups to the [2Fe-2S] cluster of DRE2, another key component of the CIA machinery. In turn, this reduced cluster provides electrons for assembly of cytosolic iron-sulfur cluster proteins. Positively controls H(2)O(2)-induced cell death. The protein is NADPH-dependent diflavin oxidoreductase 1 of Candida albicans (strain SC5314 / ATCC MYA-2876) (Yeast).